A 940-amino-acid chain; its full sequence is Isoleucine--tRNA ligase (940 aa).

The short motif at 58-68 (PYANGSIHIGH) is the 'HIGH' region element. E563 contributes to the L-isoleucyl-5'-AMP binding site. The 'KMSKS' region signature appears at 604–608 (KMSKS). K607 lines the ATP pocket. Zn(2+)-binding residues include C902, C905, C922, and C925.

The protein belongs to the class-I aminoacyl-tRNA synthetase family. IleS type 1 subfamily. As to quaternary structure, monomer. Zn(2+) is required as a cofactor.

The protein localises to the cytoplasm. It carries out the reaction tRNA(Ile) + L-isoleucine + ATP = L-isoleucyl-tRNA(Ile) + AMP + diphosphate. Functionally, catalyzes the attachment of isoleucine to tRNA(Ile). As IleRS can inadvertently accommodate and process structurally similar amino acids such as valine, to avoid such errors it has two additional distinct tRNA(Ile)-dependent editing activities. One activity is designated as 'pretransfer' editing and involves the hydrolysis of activated Val-AMP. The other activity is designated 'posttransfer' editing and involves deacylation of mischarged Val-tRNA(Ile). This chain is Isoleucine--tRNA ligase, found in Marinomonas sp. (strain MWYL1).